We begin with the raw amino-acid sequence, 786 residues long: Endonuclease MutS2 (786 aa).

335-342 (GPNTGGKT) is a binding site for ATP. Positions 711–786 (LDLRGERFEN…GLGVTVVELK (76 aa)) constitute a Smr domain.

It belongs to the DNA mismatch repair MutS family. MutS2 subfamily. Homodimer. Binds to stalled ribosomes, contacting rRNA.

Endonuclease that is involved in the suppression of homologous recombination and thus may have a key role in the control of bacterial genetic diversity. Functionally, acts as a ribosome collision sensor, splitting the ribosome into its 2 subunits. Detects stalled/collided 70S ribosomes which it binds and splits by an ATP-hydrolysis driven conformational change. Acts upstream of the ribosome quality control system (RQC), a ribosome-associated complex that mediates the extraction of incompletely synthesized nascent chains from stalled ribosomes and their subsequent degradation. Probably generates substrates for RQC. The protein is Endonuclease MutS2 of Bacillus cereus (strain Q1).